The primary structure comprises 78 residues: Small ribosomal subunit protein bS20 (78 aa).

A disordered region spans residues 55 to 78 (KSKGLIHKNKASRDKARLASKLAK).

It belongs to the bacterial ribosomal protein bS20 family.

Functionally, binds directly to 16S ribosomal RNA. The chain is Small ribosomal subunit protein bS20 from Streptococcus mutans serotype c (strain ATCC 700610 / UA159).